Consider the following 689-residue polypeptide: uncharacterized protein (689 aa).

S566 serves as a coordination point for substrate. Y579 serves as the catalytic Proton acceptor.

This sequence belongs to the short-chain dehydrogenases/reductases (SDR) family.

This is an uncharacterized protein from Bacillus subtilis (strain 168).